Consider the following 151-residue polypeptide: Large ribosomal subunit protein bL9 (151 aa).

This sequence belongs to the bacterial ribosomal protein bL9 family.

Its function is as follows. Binds to the 23S rRNA. The chain is Large ribosomal subunit protein bL9 from Mycoplasmopsis agalactiae (strain NCTC 10123 / CIP 59.7 / PG2) (Mycoplasma agalactiae).